The following is a 159-amino-acid chain: MEKIPSFQLDHIRLKRGIYVSRKDYIGGEVVTTFDIRMKEPNREPVLGAPELHTIEHLAATYLRNHPLYKDRIVFWGPMGCLTGNYFLMRGNYVSKDILPLMQETFRFIRDFEGEVPGTEPRDCGNCLLHNLPMAKYEAEKYLREVLDVATEENLNYPD.

Positions 53, 57, and 124 each coordinate Fe cation.

This sequence belongs to the LuxS family. Homodimer. Requires Fe cation as cofactor.

The catalysed reaction is S-(5-deoxy-D-ribos-5-yl)-L-homocysteine = (S)-4,5-dihydroxypentane-2,3-dione + L-homocysteine. Its function is as follows. Involved in the synthesis of autoinducer 2 (AI-2) which is secreted by bacteria and is used to communicate both the cell density and the metabolic potential of the environment. The regulation of gene expression in response to changes in cell density is called quorum sensing. Catalyzes the transformation of S-ribosylhomocysteine (RHC) to homocysteine (HC) and 4,5-dihydroxy-2,3-pentadione (DPD). This is S-ribosylhomocysteine lyase from Porphyromonas gingivalis (strain ATCC 33277 / DSM 20709 / CIP 103683 / JCM 12257 / NCTC 11834 / 2561).